The following is a 162-amino-acid chain: NADH-quinone oxidoreductase subunit I (162 aa).

4Fe-4S ferredoxin-type domains are found at residues 53–83 (QRRY…IESE) and 93–122 (SRYD…ETHI). Cys63, Cys66, Cys69, Cys73, Cys102, Cys105, Cys108, and Cys112 together coordinate [4Fe-4S] cluster.

Belongs to the complex I 23 kDa subunit family. NDH-1 is composed of 14 different subunits. Subunits NuoA, H, J, K, L, M, N constitute the membrane sector of the complex. Requires [4Fe-4S] cluster as cofactor.

The protein resides in the cell inner membrane. The enzyme catalyses a quinone + NADH + 5 H(+)(in) = a quinol + NAD(+) + 4 H(+)(out). NDH-1 shuttles electrons from NADH, via FMN and iron-sulfur (Fe-S) centers, to quinones in the respiratory chain. The immediate electron acceptor for the enzyme in this species is believed to be ubiquinone. Couples the redox reaction to proton translocation (for every two electrons transferred, four hydrogen ions are translocated across the cytoplasmic membrane), and thus conserves the redox energy in a proton gradient. This chain is NADH-quinone oxidoreductase subunit I, found in Chromobacterium violaceum (strain ATCC 12472 / DSM 30191 / JCM 1249 / CCUG 213 / NBRC 12614 / NCIMB 9131 / NCTC 9757 / MK).